A 337-amino-acid polypeptide reads, in one-letter code: Holliday junction branch migration complex subunit RuvB (337 aa).

The tract at residues 4-184 (ADRLIEPIAS…FGIVQRLEFY (181 aa)) is large ATPase domain (RuvB-L). Residues Ile-23, Arg-24, Gly-65, Lys-68, Thr-69, Thr-70, 131-133 (EDY), Arg-174, Tyr-184, and Arg-221 contribute to the ATP site. Thr-69 lines the Mg(2+) pocket. A small ATPAse domain (RuvB-S) region spans residues 185-255 (NVADLSTIVS…TAAAALDMLE (71 aa)). The interval 258 to 337 (SEGFDIMDRK…FGITKDQTKD (80 aa)) is head domain (RuvB-H). 3 residues coordinate DNA: Arg-294, Arg-313, and Arg-318.

It belongs to the RuvB family. As to quaternary structure, homohexamer. Forms an RuvA(8)-RuvB(12)-Holliday junction (HJ) complex. HJ DNA is sandwiched between 2 RuvA tetramers; dsDNA enters through RuvA and exits via RuvB. An RuvB hexamer assembles on each DNA strand where it exits the tetramer. Each RuvB hexamer is contacted by two RuvA subunits (via domain III) on 2 adjacent RuvB subunits; this complex drives branch migration. In the full resolvosome a probable DNA-RuvA(4)-RuvB(12)-RuvC(2) complex forms which resolves the HJ.

It localises to the cytoplasm. The enzyme catalyses ATP + H2O = ADP + phosphate + H(+). In terms of biological role, the RuvA-RuvB-RuvC complex processes Holliday junction (HJ) DNA during genetic recombination and DNA repair, while the RuvA-RuvB complex plays an important role in the rescue of blocked DNA replication forks via replication fork reversal (RFR). RuvA specifically binds to HJ cruciform DNA, conferring on it an open structure. The RuvB hexamer acts as an ATP-dependent pump, pulling dsDNA into and through the RuvAB complex. RuvB forms 2 homohexamers on either side of HJ DNA bound by 1 or 2 RuvA tetramers; 4 subunits per hexamer contact DNA at a time. Coordinated motions by a converter formed by DNA-disengaged RuvB subunits stimulates ATP hydrolysis and nucleotide exchange. Immobilization of the converter enables RuvB to convert the ATP-contained energy into a lever motion, pulling 2 nucleotides of DNA out of the RuvA tetramer per ATP hydrolyzed, thus driving DNA branch migration. The RuvB motors rotate together with the DNA substrate, which together with the progressing nucleotide cycle form the mechanistic basis for DNA recombination by continuous HJ branch migration. Branch migration allows RuvC to scan DNA until it finds its consensus sequence, where it cleaves and resolves cruciform DNA. The chain is Holliday junction branch migration complex subunit RuvB from Colwellia psychrerythraea (strain 34H / ATCC BAA-681) (Vibrio psychroerythus).